A 463-amino-acid polypeptide reads, in one-letter code: L-seryl-tRNA(Sec) selenium transferase (463 aa).

Lys-295 bears the N6-(pyridoxal phosphate)lysine mark.

It belongs to the SelA family. In terms of assembly, homodecamer; pentamer of dimers. Binds only one seryl-tRNA(Sec) per dimer. Pyridoxal 5'-phosphate is required as a cofactor.

The protein localises to the cytoplasm. It catalyses the reaction L-seryl-tRNA(Sec) + selenophosphate + H(+) = L-selenocysteinyl-tRNA(Sec) + phosphate. Its pathway is aminoacyl-tRNA biosynthesis; selenocysteinyl-tRNA(Sec) biosynthesis; selenocysteinyl-tRNA(Sec) from L-seryl-tRNA(Sec) (bacterial route): step 1/1. Its function is as follows. Converts seryl-tRNA(Sec) to selenocysteinyl-tRNA(Sec) required for selenoprotein biosynthesis. The polypeptide is L-seryl-tRNA(Sec) selenium transferase (Escherichia coli (strain K12 / MC4100 / BW2952)).